The sequence spans 270 residues: Interleukin-33 (270 aa).

The interval 1 to 65 (MKPKMKYSTN…EACYFRRETT (65 aa)) is homeodomain-like HTH domain. Residues 1–94 (MKPKMKYSTN…CQQQSTVESF (94 aa)) constitute a propeptide that is removed on maturation. An interaction with RELA region spans residues 64–111 (TTKRPSLKTDRKHKRHLVLAACQQQSTVESFAFGISGVQKYTRALHDS).

The protein belongs to the IL-1 family. Highly divergent. Forms a 1:1:1 heterotrimeric complex with its primary high-affinity receptor IL1RL1 and the coreceptor IL1RAP. Interacts with cargo receptor TMED10; the interaction mediates the translocation from the cytoplasm into the ERGIC (endoplasmic reticulum-Golgi intermediate compartment) and thereby secretion. In terms of processing, the full-length protein can be released from cells and is able to signal via the IL1RL1/ST2 receptor. However, proteolytic processing by CELA1, CSTG/cathepsin G and ELANE/neutrophil elastase produces C-terminal peptides that are more active than the unprocessed full-length protein. May also be proteolytically processed by calpains. Proteolytic cleavage mediated by apoptotic caspases including CASP3 and CASP7 results in IL33 inactivation. In vitro proteolytic cleavage by CASP1 was reported but could not be confirmed in vivo suggesting that IL33 is probably not a direct substrate for that caspase.

It localises to the nucleus. It is found in the chromosome. The protein resides in the cytoplasm. Its subcellular location is the cytoplasmic vesicle. The protein localises to the secretory vesicle. It localises to the secreted. In terms of biological role, cytokine that binds to and signals through the IL1RL1/ST2 receptor which in turn activates NF-kappa-B and MAPK signaling pathways in target cells. Involved in the maturation of Th2 cells inducing the secretion of T-helper type 2-associated cytokines. Also involved in activation of mast cells, basophils, eosinophils and natural killer cells. Acts as a chemoattractant for Th2 cells, and may function as an 'alarmin', that amplifies immune responses during tissue injury. Induces rapid UCP2-dependent mitochondrial rewiring that attenuates the generation of reactive oxygen species and preserves the integrity of Krebs cycle required for persistent production of itaconate and subsequent GATA3-dependent differentiation of inflammation-resolving alternatively activated macrophages. In quiescent endothelia the uncleaved form is constitutively and abundantly expressed, and acts as a chromatin-associated nuclear factor with transcriptional repressor properties, it may sequester nuclear NF-kappaB/RELA, lowering expression of its targets. This form is rapidely lost upon angiogenic or pro-inflammatory activation. This is Interleukin-33 (IL33) from Pongo abelii (Sumatran orangutan).